The chain runs to 370 residues: Gibberellin 3-beta-dioxygenase 2-1 (370 aa).

Positions 205–306 (MTATMHLNWY…RISLGYFLGP (102 aa)) constitute a Fe2OG dioxygenase domain. Histidine 229, aspartate 231, and histidine 287 together coordinate Fe cation. The active site involves arginine 297.

The protein belongs to the iron/ascorbate-dependent oxidoreductase family. GA3OX subfamily. Requires L-ascorbate as cofactor. Fe cation serves as cofactor. In terms of tissue distribution, expressed in internodes, nodes and the ear of the elongating stem.

The catalysed reaction is gibberellin A20 + 2-oxoglutarate + O2 = gibberellin A1 + succinate + CO2. Functionally, converts the inactive gibberellin precursors GA9 and GA20 in the bioactives gibberellins GA4 and GA1. Also accepts GA15, GA44, the 2,3-unsaturated GA5 and 2,3-dihydroGA9 as substrate. No activity with GA12, GA53, GA24, GA19 and GA25. Also possesses 2-beta-hydroxylase, 2,3-desaturase, 2,3-epoxidase and 13-hydroxylase activities. The protein is Gibberellin 3-beta-dioxygenase 2-1 (GA3ox2-1) of Triticum aestivum (Wheat).